Reading from the N-terminus, the 211-residue chain is Troponin I, cardiac muscle (211 aa).

An N-acetylalanine modification is found at alanine 1. The tract at residues 1–43 (ADESRDAAGEARPAPAPVRRRSSANYRAYATEPHAKSKKKISA) is disordered. Serine 4 carries the phosphoserine modification. Serine 22 bears the Phosphoserine; by PHK, PKA and PKD/PRKD1 mark. Serine 23 bears the Phosphoserine; by PKA and PKD/PRKD1 mark. Tyrosine 26 carries the phosphotyrosine modification. Position 31 is a phosphothreonine; by STK4/MST1 (threonine 31). The involved in binding TNC stretch occupies residues 32-79 (EPHAKSKKKISASRKLQLKTLMLQIAKQELEREAEERRGEKGRALSTR). Phosphoserine; by PKC/PRKCE is present on residues serine 42 and serine 44. At threonine 51 the chain carries Phosphothreonine; by STK4/MST1. Serine 77 is subject to Phosphoserine. The residue at position 78 (threonine 78) is a Phosphothreonine. Phosphothreonine; by STK4/MST1 is present on residues threonine 129 and threonine 143. Residues 129–150 (TQKIFDLRGKFKRPTLRLRVRI) form an involved in binding TNC and actin region. Position 151 is a phosphoserine; by PAK3 (serine 151). Threonine 182 bears the Phosphothreonine mark. Serine 200 is subject to Phosphoserine.

Belongs to the troponin I family. Interacts with TRIM63. Binds to actin and tropomyosin. Interacts with STK4/MST1. Post-translationally, phosphorylated at Ser-22 and Ser-23 by PRKD1; phosphorylation reduces myofilament calcium sensitivity. Phosphorylated preferentially at Thr-31. Phosphorylation by STK4/MST1 alters its binding affinity to TNNC1 (cardiac Tn-C) and TNNT2 (cardiac Tn-T). Phosphorylated at Ser-42 and Ser-44 by PRKCE; phosphorylation increases myocardium contractile dysfunction. Ser-22 is one of three sites in the region of residues 1-48 that are phosphorylated by phosphorylase kinase.

Its function is as follows. Troponin I is the inhibitory subunit of troponin, the thin filament regulatory complex which confers calcium-sensitivity to striated muscle actomyosin ATPase activity. The protein is Troponin I, cardiac muscle (TNNI3) of Oryctolagus cuniculus (Rabbit).